A 500-amino-acid polypeptide reads, in one-letter code: Protein gar2 (500 aa).

Composition is skewed to basic and acidic residues over residues 1–41 (MAKK…KEIA) and 59–68 (KRASSPEPSK). The segment at 1–262 (MAKKDKTSVK…TKPSQDSNET (262 aa)) is disordered. Basic residues predominate over residues 69 to 78 (KSVKKQKKSK). The span at 90–120 (ESSSSESESSSSESESSSSESESSSSESSSS) shows a compositional bias: low complexity. A compositionally biased stretch (basic and acidic residues) spans 126–137 (VIVKTEEKKESS). Residues serine 143, serine 144, and serine 146 each carry the phosphoserine modification. A compositionally biased stretch (basic and acidic residues) spans 152 to 163 (AVVKIEEKKESS). Positions 164 to 182 (SDSSSESSSSESESESSSS) are enriched in low complexity. A compositionally biased stretch (basic and acidic residues) spans 191–201 (VEKTEEKKEGS). The segment covering 202-218 (SESSSDSESSSDSSSES) has biased composition (low complexity). Residues 219–233 (GDSDSSSDSESESSS) show a composition bias toward acidic residues. Basic and acidic residues predominate over residues 234–250 (EDEKKRKAEPASEERPA). RRM domains are found at residues 263–341 (CTVF…LSNP) and 366–443 (DTVF…FSTP). Residues 441-500 (STPRTGGGSRGGRGGFGGRGGFGGRGGFGGGRGRGRGGARSGNPNRGSVAPFSGNKVTFD) are disordered. Positions 445 to 480 (TGGGSRGGRGGFGGRGGFGGRGGFGGGRGRGRGGAR) are enriched in gly residues.

The protein belongs to the RRM GAR family.

It localises to the nucleus. The protein localises to the nucleolus. Its function is as follows. Helps the assembly of pre-ribosomal particles containing 18S rRNA. In Schizosaccharomyces pombe (strain 972 / ATCC 24843) (Fission yeast), this protein is Protein gar2 (gar2).